The following is a 96-amino-acid chain: Large ribosomal subunit protein eL14 (96 aa).

It belongs to the eukaryotic ribosomal protein eL14 family.

The protein is Large ribosomal subunit protein eL14 of Sulfolobus acidocaldarius (strain ATCC 33909 / DSM 639 / JCM 8929 / NBRC 15157 / NCIMB 11770).